Consider the following 246-residue polypeptide: uncharacterized protein (246 aa).

A signal peptide spans 1-30; it reads MKKKQVSHAIIISVMLSFVIAVFHTIHASE.

This is an uncharacterized protein from Bacillus subtilis (strain 168).